Reading from the N-terminus, the 311-residue chain is Delta(1)-pyrroline-2-carboxylate/Delta(1)-piperideine-2-carboxylate reductase (311 aa).

This sequence belongs to the ornithine cyclodeaminase/mu-crystallin family. As to quaternary structure, homodimer.

It carries out the reaction L-pipecolate + NAD(+) = Delta(1)-piperideine-2-carboxylate + NADH + H(+). It catalyses the reaction L-pipecolate + NADP(+) = Delta(1)-piperideine-2-carboxylate + NADPH + H(+). The enzyme catalyses L-proline + NAD(+) = 1-pyrroline-2-carboxylate + NADH + H(+). The catalysed reaction is L-proline + NADP(+) = 1-pyrroline-2-carboxylate + NADPH + H(+). It functions in the pathway amino-acid degradation. Functionally, catalyzes the reduction of both Delta(1)-pyrroline-2-carboxylate (Pyr2C) and Delta(1)-piperideine-2-carboxylate (Pip2C) to L-proline and L-pipecolate, respectively, using NADPH or NADH as the electron donor. Can also catalyze the reverse oxidation reactions, albeit at a much lower rate. Together with LhpH, is involved in a trans-3-hydroxy-L-proline (t3LHyp) degradation pathway to L-proline, which allows A.brasilense to grow on t3LHyp as a sole carbon source. Also appears to be involved in D-proline and D-lysine metabolism. Does not show ornithine cyclodeaminase (OCD) activity. The polypeptide is Delta(1)-pyrroline-2-carboxylate/Delta(1)-piperideine-2-carboxylate reductase (Azospirillum brasilense).